Reading from the N-terminus, the 89-residue chain is Small ribosomal subunit protein uS15 (89 aa).

It belongs to the universal ribosomal protein uS15 family. As to quaternary structure, part of the 30S ribosomal subunit. Forms a bridge to the 50S subunit in the 70S ribosome, contacting the 23S rRNA.

Functionally, one of the primary rRNA binding proteins, it binds directly to 16S rRNA where it helps nucleate assembly of the platform of the 30S subunit by binding and bridging several RNA helices of the 16S rRNA. Its function is as follows. Forms an intersubunit bridge (bridge B4) with the 23S rRNA of the 50S subunit in the ribosome. The polypeptide is Small ribosomal subunit protein uS15 (Mycobacterium avium (strain 104)).